We begin with the raw amino-acid sequence, 295 residues long: Ribosomal protein L11 methyltransferase (295 aa).

Positions 150, 171, 193, and 232 each coordinate S-adenosyl-L-methionine.

The protein belongs to the methyltransferase superfamily. PrmA family.

Its subcellular location is the cytoplasm. The catalysed reaction is L-lysyl-[protein] + 3 S-adenosyl-L-methionine = N(6),N(6),N(6)-trimethyl-L-lysyl-[protein] + 3 S-adenosyl-L-homocysteine + 3 H(+). Its function is as follows. Methylates ribosomal protein L11. This chain is Ribosomal protein L11 methyltransferase, found in Neisseria meningitidis serogroup A / serotype 4A (strain DSM 15465 / Z2491).